The sequence spans 213 residues: MRQRNKPWADEYLQENNHIVISDPKSKKGNWSQLFNNNNPIHVEIGSGKGQFILGMAKQYPEINFIGIELAKSIIVSAVQKIEEENLANVFMLNENAIDVREMFADDEISMIYLNFSDPWPKNRHEKRRLTYGRFLEQYQDILGANGEVILKTDNRGLFEYSVVSFSQNGMNINEINVDLHAIQDETNVMTEYEEKFSTKGQPIYRCKAAFEK.

The S-adenosyl-L-methionine site is built by glutamate 44, glutamate 69, asparagine 96, and aspartate 118. The active site involves aspartate 118. Lysine 122 is a substrate binding site. Residues 124–129 (RHEKRR) are interaction with RNA. Residues aspartate 154 and 191–194 (TEYE) each bind substrate.

It belongs to the class I-like SAM-binding methyltransferase superfamily. TrmB family.

It catalyses the reaction guanosine(46) in tRNA + S-adenosyl-L-methionine = N(7)-methylguanosine(46) in tRNA + S-adenosyl-L-homocysteine. It functions in the pathway tRNA modification; N(7)-methylguanine-tRNA biosynthesis. Functionally, catalyzes the formation of N(7)-methylguanine at position 46 (m7G46) in tRNA. The polypeptide is tRNA (guanine-N(7)-)-methyltransferase (Oceanobacillus iheyensis (strain DSM 14371 / CIP 107618 / JCM 11309 / KCTC 3954 / HTE831)).